A 386-amino-acid polypeptide reads, in one-letter code: Succinyl-diaminopimelate desuccinylase (386 aa).

Position 75 (His75) interacts with Zn(2+). Residue Asp77 is part of the active site. Asp108 contributes to the Zn(2+) binding site. Catalysis depends on Glu138, which acts as the Proton acceptor. Glu139, Glu167, and His356 together coordinate Zn(2+).

The protein belongs to the peptidase M20A family. DapE subfamily. Homodimer. Zn(2+) is required as a cofactor. Requires Co(2+) as cofactor.

It catalyses the reaction N-succinyl-(2S,6S)-2,6-diaminopimelate + H2O = (2S,6S)-2,6-diaminopimelate + succinate. Its pathway is amino-acid biosynthesis; L-lysine biosynthesis via DAP pathway; LL-2,6-diaminopimelate from (S)-tetrahydrodipicolinate (succinylase route): step 3/3. In terms of biological role, catalyzes the hydrolysis of N-succinyl-L,L-diaminopimelic acid (SDAP), forming succinate and LL-2,6-diaminopimelate (DAP), an intermediate involved in the bacterial biosynthesis of lysine and meso-diaminopimelic acid, an essential component of bacterial cell walls. In Caulobacter vibrioides (strain ATCC 19089 / CIP 103742 / CB 15) (Caulobacter crescentus), this protein is Succinyl-diaminopimelate desuccinylase.